A 488-amino-acid chain; its full sequence is Patatin-like protein 7 (488 aa).

The tract at residues 23–49 (QRGGDGATAASKSANDYNNNDSLLTDM) is disordered. Polar residues predominate over residues 32–47 (ASKSANDYNNNDSLLT). The region spanning 101–301 (LSIDGGGMRG…AMSNPTAAAI (201 aa)) is the PNPLA domain. The GXGXXG signature appears at 105–110 (GGGMRG). Catalysis depends on serine 145, which acts as the Nucleophile.

Belongs to the patatin family. In terms of tissue distribution, highly expressed in roots and at lower levels in leaves, stems, flowers and siliques.

It is found in the cell membrane. In terms of biological role, possesses non-specific lipolytic acyl hydrolase (LAH) activity. Catalyzes the hydrolysis of the galactolipids monogalactosyldiacylglycerol (MGDG) and digalactosyldiacylglycerol (DGDG), and the phoshpolipids phosphatidylcholine (PC), phosphatidylethanolamine (PE), phosphatidylglycerol (PG), phosphatidic acid (PA), phosphatidylserine (PS). Favors the release of fatty acid at the sn-2 position for PC. Possesses acyl-CoA thioesterase activity. Negatively affects disease resistance to the necrotic fungal pathogen Botrytis cinerea and the avirulent bacteria Pseudomonas syringae by promoting cell death and reducing the efficiency of the hypersensitive response, respectively. However, PLP2 contributes to resistance to cucumber mosaic virus (CMV), an obligate parasite inducing hypersensitive response. May negatively regulate oxylipin production, possibly via participating in membrane repair that includes removal of oxidatively modified lipids. Enzymatic products of PLP2 may influence cellulose content and cell elongation. This chain is Patatin-like protein 7 (PLP7), found in Arabidopsis thaliana (Mouse-ear cress).